The following is a 157-amino-acid chain: Endoribonuclease YbeY (157 aa).

Residues H111, H115, and H121 each contribute to the Zn(2+) site. A disordered region spans residues 136–157 (ELLAELGHPDPYADDETDSITH). The span at 147-157 (YADDETDSITH) shows a compositional bias: acidic residues.

This sequence belongs to the endoribonuclease YbeY family. It depends on Zn(2+) as a cofactor.

Its subcellular location is the cytoplasm. Single strand-specific metallo-endoribonuclease involved in late-stage 70S ribosome quality control and in maturation of the 3' terminus of the 16S rRNA. The protein is Endoribonuclease YbeY of Pseudomonas putida (strain ATCC 700007 / DSM 6899 / JCM 31910 / BCRC 17059 / LMG 24140 / F1).